Here is a 342-residue protein sequence, read N- to C-terminus: Uroporphyrinogen decarboxylase (342 aa).

Substrate contacts are provided by residues 21–25 (RQAGR), D71, Y148, S203, and H316.

It belongs to the uroporphyrinogen decarboxylase family. In terms of assembly, homodimer.

The protein resides in the cytoplasm. It catalyses the reaction uroporphyrinogen III + 4 H(+) = coproporphyrinogen III + 4 CO2. It participates in porphyrin-containing compound metabolism; protoporphyrin-IX biosynthesis; coproporphyrinogen-III from 5-aminolevulinate: step 4/4. Its function is as follows. Catalyzes the decarboxylation of four acetate groups of uroporphyrinogen-III to yield coproporphyrinogen-III. The chain is Uroporphyrinogen decarboxylase from Campylobacter curvus (strain 525.92).